Reading from the N-terminus, the 901-residue chain is Viral-enhancing factor (901 aa).

Residues 27 to 330 (HRRTEVGVVL…IFTWLYNPQR (304 aa)) enclose the Peptidase M60 domain. N265, N278, N339, N349, N540, N594, N595, N642, N683, and N698 each carry an N-linked (GlcNAc...) asparagine; by host glycan.

Functionally, involved in disruption of the peritrophic membrane and fusion of nucleocapsids with midgut cells. The polypeptide is Viral-enhancing factor (VEF) (Pseudalatia unipuncta granulosis virus (PuGV)).